Here is a 626-residue protein sequence, read N- to C-terminus: Chaperone protein DnaK (626 aa).

The residue at position 197 (T197) is a Phosphothreonine; by autocatalysis. Residues 595-614 (QNMAQQQQAQGGAQQQNQNK) are compositionally biased toward low complexity. The segment at 595 to 626 (QNMAQQQQAQGGAQQQNQNKGGDDDVIDAEVE) is disordered.

Belongs to the heat shock protein 70 family.

In terms of biological role, acts as a chaperone. This chain is Chaperone protein DnaK, found in Nautilia profundicola (strain ATCC BAA-1463 / DSM 18972 / AmH).